The following is a 532-amino-acid chain: METLEKNFKKEKSVFSAAKKKKNLSFAKNEKTTTLKDALQAGDILTVKITALGSKNIGVAELKNGYTVLVPNTKCGDKVQVKVEKIFLGKGTNSILNQKIKYVVARVDNSGTKTSNFEKTSNSLKFDFKVGQKFRVTIAKKGPKNSGLVPVAKNFLFIVPNTKVGENIVVEIQKIKQNYAFAKPILSKQMNVVQENNQMIGQQFHIVIPSSAKTIANSFVVKLNGQFVFVKKSLGVQLEDTVKIQIQKSTGTFALAKILKISPISSKEKKAMVKETVQKMIQSSMHFGEKAIRCNANMRKYIWYRKKGLGMYTNSKNTFVSIKETKKPMVKRGRHVLNVLKTQRCFAEALKQLAKYAAKGKTFLFVGTKKPAASLVAKTALLSNTSFFVNTRWLGGMLTNWKTILKSISQIRPILKQKQKILQKILEKREKIQRRLFNKVYLLRKKSQKFMIKGKYLIQQILRSKNFLIEKSQKFIQTKNALFSANALLLNASKNLKMKKIQILKQIQQLEFAAVEILKQKQPIKSFNSIKS.

Residues 1-271 are N-terminal extension; it reads METLEKNFKK…SPISSKEKKA (271 aa). 3 TRAM domains span residues 38–97, 127–186, and 197–260; these read ALQA…SILN, DFKV…KPIL, and NQMI…KILK.

This sequence belongs to the universal ribosomal protein uS2 family.

It localises to the plastid. Its subcellular location is the chloroplast. The protein is Small ribosomal subunit protein uS2cz (rps2-1) of Tetradesmus obliquus (Green alga).